A 509-amino-acid chain; its full sequence is ATP synthase subunit alpha (509 aa).

169–176 (GDRQTGKT) is a binding site for ATP.

It belongs to the ATPase alpha/beta chains family. As to quaternary structure, F-type ATPases have 2 components, CF(1) - the catalytic core - and CF(0) - the membrane proton channel. CF(1) has five subunits: alpha(3), beta(3), gamma(1), delta(1), epsilon(1). CF(0) has three main subunits: a(1), b(2) and c(9-12). The alpha and beta chains form an alternating ring which encloses part of the gamma chain. CF(1) is attached to CF(0) by a central stalk formed by the gamma and epsilon chains, while a peripheral stalk is formed by the delta and b chains.

The protein localises to the cell inner membrane. The enzyme catalyses ATP + H2O + 4 H(+)(in) = ADP + phosphate + 5 H(+)(out). Functionally, produces ATP from ADP in the presence of a proton gradient across the membrane. The alpha chain is a regulatory subunit. The chain is ATP synthase subunit alpha from Bradyrhizobium diazoefficiens (strain JCM 10833 / BCRC 13528 / IAM 13628 / NBRC 14792 / USDA 110).